Here is a 348-residue protein sequence, read N- to C-terminus: Dihydroorotase (348 aa).

Zn(2+) contacts are provided by His-14 and His-16. Residues 16–18 (HLR) and Asn-42 contribute to the substrate site. Positions 100, 137, and 175 each coordinate Zn(2+). Position 100 is an N6-carboxylysine (Lys-100). His-137 lines the substrate pocket. Residue Leu-220 coordinates substrate. Asp-248 contacts Zn(2+). Asp-248 is a catalytic residue. Substrate contacts are provided by His-252 and Ala-264.

Belongs to the metallo-dependent hydrolases superfamily. DHOase family. Class II DHOase subfamily. As to quaternary structure, homodimer. Zn(2+) is required as a cofactor.

The enzyme catalyses (S)-dihydroorotate + H2O = N-carbamoyl-L-aspartate + H(+). It participates in pyrimidine metabolism; UMP biosynthesis via de novo pathway; (S)-dihydroorotate from bicarbonate: step 3/3. Catalyzes the reversible cyclization of carbamoyl aspartate to dihydroorotate. This chain is Dihydroorotase, found in Pseudomonas putida (strain ATCC 700007 / DSM 6899 / JCM 31910 / BCRC 17059 / LMG 24140 / F1).